The following is a 252-amino-acid chain: MSFSLSRLVVALGAGLLACAAQAAEVQVAVAANFTAPMKDIASQFEKDTGHKVITSFGPTGGFYSQIQNGAPFEVFLAADDTTPEKLEKEGGTVAGSRFTYAVGKLVLWSAKPGYVDDQGAVLKKNAFKHLSIANPKTAPYGAAAVQVLAKLGLTEATKSKLVEGASIAQAHQFVATGNAELGFVALSQVYKDGKLTGGSGWNVPGDLYEPIRQDAVILTKGKDNPAAQALVDYLKGPKATEVIKAYGYGLQ.

The first 23 residues, 1–23 (MSFSLSRLVVALGAGLLACAAQA), serve as a signal peptide directing secretion. Residues Thr60 and Ile168 each contribute to the molybdate site.

The protein belongs to the bacterial solute-binding protein ModA family. As to quaternary structure, the complex is composed of two ATP-binding proteins (ModC), two transmembrane proteins (ModB) and a solute-binding protein (ModA).

It localises to the periplasm. Functionally, involved in the transport of molybdenum into the cell. The polypeptide is Molybdate-binding protein ModA (modA) (Azotobacter vinelandii).